The chain runs to 570 residues: Urease subunit alpha 1 (570 aa).

The region spanning 131–570 (GGIDTHVHFI…VPMAQRYFLF (440 aa)) is the Urease domain. Positions 136, 138, and 219 each coordinate Ni(2+). The residue at position 219 (Lys219) is an N6-carboxylysine. Residue His221 coordinates substrate. Residues His248 and His274 each coordinate Ni(2+). The active-site Proton donor is the His322. Asp362 contacts Ni(2+).

Belongs to the metallo-dependent hydrolases superfamily. Urease alpha subunit family. Heterotrimer of UreA (gamma), UreB (beta) and UreC (alpha) subunits. Three heterotrimers associate to form the active enzyme. Ni cation serves as cofactor. In terms of processing, carboxylation allows a single lysine to coordinate two nickel ions.

Its subcellular location is the cytoplasm. It carries out the reaction urea + 2 H2O + H(+) = hydrogencarbonate + 2 NH4(+). It participates in nitrogen metabolism; urea degradation; CO(2) and NH(3) from urea (urease route): step 1/1. Functionally, disrupting the ure1 operon causes loss of urease activity, decreased resistance to low pH killing in vitro and decreased pathogen survival when inoculated in BALB/c mice by gavage. The chain is Urease subunit alpha 1 from Brucella suis biovar 1 (strain 1330).